Reading from the N-terminus, the 733-residue chain is DNA-binding protein SATB2 (733 aa).

Residues 1–47 (MERRSESPCLRDSPDRRSGSPDVKGPPPVKVARLEQNGSPMGARGRP) are disordered. A Phosphoserine modification is found at Ser-20. Glycyl lysine isopeptide (Lys-Gly) (interchain with G-Cter in SUMO2) cross-links involve residues Lys-24 and Lys-30. A Phosphoserine modification is found at Ser-39. In terms of domain architecture, CMP spans 57-158 (GLMIPVFCVV…VVTLKIQLQS (102 aa)). Lys-161 participates in a covalent cross-link: Glycyl lysine isopeptide (Lys-Gly) (interchain with G-Cter in SUMO2). Residues 161 to 234 (KLEDLPAEQW…WYKKYKKIKV (74 aa)) form the CUTL domain. Residue Lys-233 forms a Glycyl lysine isopeptide (Lys-Gly) (interchain with G-Cter in SUMO) linkage. Lys-350 participates in a covalent cross-link: Glycyl lysine isopeptide (Lys-Gly) (interchain with G-Cter in SUMO); alternate. A Glycyl lysine isopeptide (Lys-Gly) (interchain with G-Cter in SUMO2); alternate cross-link involves residue Lys-350. The segment at residues 350–437 (KPEPTNSSVE…ERDRIYQDER (88 aa)) is a DNA-binding region (CUT 1). The disordered stretch occupies residues 435 to 473 (DERERSMNPNVSMVSSASSSPSSSRTPQAKTSTPTTDLP). Positions 441-458 (MNPNVSMVSSASSSPSSS) are enriched in low complexity. Ser-454 bears the Phosphoserine mark. Polar residues predominate over residues 459–470 (RTPQAKTSTPTT). At Thr-467 the chain carries Phosphothreonine. Positions 473–560 (PIKVDGANVN…ERDVIYEEES (88 aa)) form a DNA-binding region, CUT 2. Residue Lys-475 forms a Glycyl lysine isopeptide (Lys-Gly) (interchain with G-Cter in SUMO2) linkage. 2 disordered regions span residues 580-617 (QVLH…KPRS) and 691-733 (DEEL…TDQR). Ser-594 bears the Phosphoserine mark. A DNA-binding region (homeobox) is located at residues 615-674 (PRSRTKISLEALGILQSFIHDVGLYPDQEAIHTLSAQLDLPKHTIIKFFQNQRYHVKHHG). Residues 694 to 708 (LLTESEENDSEEGSE) are compositionally biased toward acidic residues. Positions 709–733 (EMYKVEAEEENADKSKAAPAETDQR) are enriched in basic and acidic residues. Lys-724 is covalently cross-linked (Glycyl lysine isopeptide (Lys-Gly) (interchain with G-Cter in SUMO2)).

This sequence belongs to the CUT homeobox family. In terms of assembly, interacts with PIAS1. Interacts with ATF4 and RUNX2; resulting in enhanced DNA binding and transactivation by these transcription factors. In terms of processing, sumoylated by PIAS1. Sumoylation promotes nuclear localization, but represses transcription factor activity. In terms of tissue distribution, expressed in cortical neurons that extend axons across the corpus callosum. Also expressed in branchial arches and in cells of the osteoblast lineage, but not in chondrocytes and osteoclasts.

It is found in the nucleus matrix. Its function is as follows. Binds to DNA, at nuclear matrix- or scaffold-associated regions. Thought to recognize the sugar-phosphate structure of double-stranded DNA. Transcription factor controlling nuclear gene expression, by binding to matrix attachment regions (MARs) of DNA and inducing a local chromatin-loop remodeling. Acts as a docking site for several chromatin remodeling enzymes and also by recruiting corepressors (HDACs) or coactivators (HATs) directly to promoters and enhancers. Required for the initiation of the upper-layer neurons (UL1) specific genetic program and for the inactivation of deep-layer neurons (DL) and UL2 specific genes, probably by modulating Bcl11b expression. Repressor of Ctip2 and regulatory determinant of corticocortical connections in the developing cerebral cortex. May play an important role in palate formation. Acts as a molecular node in a transcriptional network regulating skeletal development and osteoblast differentiation. The chain is DNA-binding protein SATB2 (Satb2) from Mus musculus (Mouse).